The primary structure comprises 177 residues: Peptide methionine sulfoxide reductase MsrA (177 aa).

The active site involves Cys11.

Belongs to the MsrA Met sulfoxide reductase family.

It carries out the reaction L-methionyl-[protein] + [thioredoxin]-disulfide + H2O = L-methionyl-(S)-S-oxide-[protein] + [thioredoxin]-dithiol. It catalyses the reaction [thioredoxin]-disulfide + L-methionine + H2O = L-methionine (S)-S-oxide + [thioredoxin]-dithiol. Functionally, has an important function as a repair enzyme for proteins that have been inactivated by oxidation. Catalyzes the reversible oxidation-reduction of methionine sulfoxide in proteins to methionine. The protein is Peptide methionine sulfoxide reductase MsrA of Picrophilus torridus (strain ATCC 700027 / DSM 9790 / JCM 10055 / NBRC 100828 / KAW 2/3).